Reading from the N-terminus, the 545-residue chain is E3 ubiquitin-protein ligase ipaH9.8 (545 aa).

The segment at 1 to 242 (MLPINNNFSL…YHGPRIYFSM (242 aa)) is interaction with target proteins. 8 LRR repeats span residues 57-77 (NSDE…NLPA), 78-99 (QITL…PVTL), 100-117 (KKLY…VLPP), 118-139 (ALES…PDSL), 140-157 (LTMN…SLPQ), 158-179 (ALKN…SEGN), 182-203 (VVRE…ILNL), and 205-228 (NECS…QRLT). A linker region spans residues 243–250 (SDGQQNTL). The interval 251 to 545 (HRPLADAVTA…SENGSQLHHS (295 aa)) is E3 ubiquitin-protein ligase catalytic domain. The NEL domain occupies 253–545 (PLADAVTAWF…SENGSQLHHS (293 aa)). The Glycyl thioester intermediate role is filled by C337.

Belongs to the LRR-containing bacterial E3 ligase family. Also interacts with human and mouse U2AF1 (U2AF35). Post-translationally, ubiquitinated in the presence of host E1 ubiquitin-activating enzyme, E2 ubiquitin-conjugating enzyme and ubiquitin.

It is found in the secreted. It localises to the host cytoplasm. Its subcellular location is the host nucleus. It catalyses the reaction S-ubiquitinyl-[E2 ubiquitin-conjugating enzyme]-L-cysteine + [acceptor protein]-L-lysine = [E2 ubiquitin-conjugating enzyme]-L-cysteine + N(6)-ubiquitinyl-[acceptor protein]-L-lysine.. With respect to regulation, exists in an autoinhibited state in the absence of substrate protein, due to interactions of the leucine-rich repeats with NEL domain. Is activated upon binding to a substrate protein. In terms of biological role, effector E3 ubiquitin ligase that interferes with host's ubiquitination pathway and modulates the acute inflammatory responses, thus facilitating bacterial colonization within the host cell. Interacts with IKBKG (NEMO) and TNIP1 (ABIN-1), a ubiquitin-binding adapter protein, which results in TNIP1-dependent 'Lys-27'-linked polyubiquitination of IKBKG. Consequently, polyubiquitinated IKBKG undergoes proteasome-dependent degradation, which perturbs NF-kappa-B activation during bacterial infection. Mediates polyubiquitination of host U2AF1, leading to its proteasomal degradation. Catalyzes 'Lys-48'-linked polyubiquitination and subsequent degradation of a subset of host guanylate-binding proteins (GBP1, GBP2, GBP4 and GBP6), thereby suppressing host cell defense. In contrast, host GBP3 and GBP7 are not ubiquitinated by IpaH9.8. Uses UBE2D2 (UBCH5B) as an E2 ubiquitin-conjugating enzyme. This is E3 ubiquitin-protein ligase ipaH9.8 (ipaH9.8) from Shigella boydii serotype 18 (strain CDC 3083-94 / BS512).